Reading from the N-terminus, the 1170-residue chain is Glucose transport transcription regulator RGT1 (1170 aa).

Residues 1 to 22 (MNELNTVSTNSSDSTKDGGTSN) show a composition bias toward polar residues. 2 disordered regions span residues 1–47 (MNEL…SRAC) and 77–149 (SFDR…SNSV). Residues 47 to 76 (CDQCRKKKIKCDYKDEKGVCSNCQRNGDRC) constitute a DNA-binding region (zn(2)-C6 fungal-type). Residues 99-108 (RTNEIQDHNN) are compositionally biased toward basic and acidic residues. Residues 113 to 138 (NTFDNSNNTLNNNTGNSGDNGINSNT) are compositionally biased toward low complexity. A compositionally biased stretch (polar residues) spans 139–149 (VPSTPSRSNSV). Residues S202, S205, S208, and S229 each carry the phosphoserine modification. Disordered stretches follow at residues 226–254 (VQQS…SASG), 269–288 (APTD…IPSL), 293–323 (SNSL…LQQG), 384–506 (AQQT…HPMT), and 944–977 (NYRP…SAAP). The span at 239–250 (SGNANGSVTGSG) shows a compositional bias: low complexity. Residues 271–280 (TDDHNGEQTR) are compositionally biased toward basic and acidic residues. 2 positions are modified to phosphoserine: S283 and S284. 3 stretches are compositionally biased toward low complexity: residues 293 to 302 (SNSLLLGGQP), 309 to 323 (QQSQ…LQQG), and 385 to 397 (QQTQ…QVPQ). A phosphoserine mark is found at S410 and S414. Over residues 411–422 (APVSVTLSTDRL) the composition is skewed to polar residues. Residues 424-444 (GNENNNGEINNNNGSNNSGSS) show a composition bias toward low complexity. Residues 445 to 457 (KDTSQHSQESVTT) are compositionally biased toward polar residues. Residues 473–488 (STKKRRKSYVSKKTKP) show a composition bias toward basic residues. A compositionally biased stretch (polar residues) spans 493 to 506 (SISITSKDSAHPMT). S1130 bears the Phosphoserine mark.

It belongs to the EDS1/RGT1 family. In terms of processing, glucose-induced phosphorylation regulates the DNA-binding activity. Hyperphosphorylation in cells growing on high levels of glucose does prevents DNA-binding and dephosphorylation restores DNA-binding ability.

The protein localises to the nucleus. It is found in the cytoplasm. Glucose-responsive transcription factor that regulates expression of several glucose transporter (HXT) genes in response to glucose. In the absence of glucose, it functions as a transcriptional repressor, whereas high concentrations of glucose cause it to function as a transcriptional activator. In cells growing on low levels of glucose, has a neutral role, neither repressing nor activating transcription. Binds the consensus binding site sequence 5'-CGGANNA-3', of which multiple copies are present in all HXT promoters regulated by RGT1. This chain is Glucose transport transcription regulator RGT1 (RGT1), found in Saccharomyces cerevisiae (strain JAY291) (Baker's yeast).